A 430-amino-acid chain; its full sequence is Tektin-2 (430 aa).

2 coiled-coil regions span residues 82–160 (LTDL…QAFE) and 273–379 (EKVY…DIAC).

It belongs to the tektin family. In terms of assembly, microtubule inner protein component of sperm flagellar doublet microtubules. May interact with CCDC172. Tyrosine phosphorylated. Post-translationally, ubiquitinated, leading to its degradation. Deubiquitinated by USP16, promoting its stability.

The protein resides in the cytoplasm. The protein localises to the cytoskeleton. Its subcellular location is the cilium axoneme. It localises to the flagellum axoneme. It is found in the microtubule organizing center. In terms of biological role, microtubule inner protein (MIP) part of the dynein-decorated doublet microtubules (DMTs) in cilia and flagellar axoneme. Plays a key role in the assembly or attachment of the inner dynein arm to microtubules in sperm flagella and tracheal cilia. Forms filamentous polymers in the walls of ciliary and flagellar microtubules. This Macaca fascicularis (Crab-eating macaque) protein is Tektin-2 (TEKT2).